Consider the following 364-residue polypeptide: Variable large protein 21 (364 aa).

The N-terminal stretch at 1 to 26 is a signal peptide; sequence MRKRISAIINKLNISIMMMIVVLMIG. Cys-27 is lipidated: N-palmitoyl cysteine. The S-diacylglycerol cysteine moiety is linked to residue Cys-27.

Belongs to the variable large protein (Vlp) family. Alpha subfamily.

The protein localises to the cell outer membrane. In terms of biological role, the Vlp and Vsp proteins are antigenically distinct proteins, only one vlp or vsp gene is transcriptionally active at any one time. Switching between these genes is a mechanism of host immune response evasion. This chain is Variable large protein 21, found in Borrelia hermsii.